A 138-amino-acid polypeptide reads, in one-letter code: Small ribosomal subunit protein uS12 (138 aa).

The disordered stretch occupies residues methionine 1–lysine 20. Aspartate 102 carries the 3-methylthioaspartic acid modification. Residues aspartate 116 to asparagine 138 form a disordered region.

This sequence belongs to the universal ribosomal protein uS12 family. In terms of assembly, part of the 30S ribosomal subunit. Contacts proteins S8 and S17. May interact with IF1 in the 30S initiation complex.

Its function is as follows. With S4 and S5 plays an important role in translational accuracy. Interacts with and stabilizes bases of the 16S rRNA that are involved in tRNA selection in the A site and with the mRNA backbone. Located at the interface of the 30S and 50S subunits, it traverses the body of the 30S subunit contacting proteins on the other side and probably holding the rRNA structure together. The combined cluster of proteins S8, S12 and S17 appears to hold together the shoulder and platform of the 30S subunit. In Metamycoplasma arthritidis (strain 158L3-1) (Mycoplasma arthritidis), this protein is Small ribosomal subunit protein uS12.